Here is a 285-residue protein sequence, read N- to C-terminus: Tropomyosin alpha-3 chain (285 aa).

Residues 1 to 285 adopt a coiled-coil conformation; the sequence is MMEAIKKKMQ…DHALNDMTSI (285 aa). An N-acetylmethionine modification is found at M2. M2 is modified (N-acetylalanine). At T54 the chain carries Phosphothreonine. S62 and S88 each carry phosphoserine. T109 is subject to Phosphothreonine. A phosphoserine mark is found at S207 and S216. An N6-acetyllysine modification is found at I228. The residue at position 253 (T253) is a Phosphothreonine. Y262 is modified (phosphotyrosine). Residue S272 is modified to Phosphoserine. T283 is modified (phosphothreonine). S284 is modified (phosphoserine).

It belongs to the tropomyosin family. As to quaternary structure, homodimer. Heterodimer of an alpha (TPM1, TPM3 or TPM4) and a beta (TPM2) chain. Interacts with TMOD1. Interacts with TNNT1.

It is found in the cytoplasm. The protein localises to the cytoskeleton. Its function is as follows. Binds to actin filaments in muscle and non-muscle cells. Plays a central role, in association with the troponin complex, in the calcium dependent regulation of vertebrate striated muscle contraction. Smooth muscle contraction is regulated by interaction with caldesmon. In non-muscle cells is implicated in stabilizing cytoskeleton actin filaments. This Mus musculus (Mouse) protein is Tropomyosin alpha-3 chain (Tpm3).